The primary structure comprises 1677 residues: Zinc finger protein 831 (1677 aa).

Positions 1–26 (MEVPEPTCPAPPARDQPAPTPGPPGA) are enriched in pro residues. The disordered stretch occupies residues 1 to 43 (MEVPEPTCPAPPARDQPAPTPGPPGAPGGQASPHLTLGPVLLP). 2 consecutive C2H2-type zinc fingers follow at residues 144-166 (YLCP…IRSH) and 172-196 (FPCA…TQTH). Disordered regions lie at residues 193 to 250 (TQTH…SPGA), 270 to 398 (GSAF…AGLE), 516 to 557 (WLEP…PSGH), 663 to 931 (EAAG…VLSA), 950 to 1062 (TPLP…TCEA), 1100 to 1119 (NWEL…SGPL), 1137 to 1176 (LTRP…PFPS), 1216 to 1243 (LRDE…GPAQ), 1510 to 1597 (SAES…GQYG), and 1620 to 1677 (LITR…VIEI). 2 stretches are compositionally biased toward basic and acidic residues: residues 216 to 232 (EGDK…RGES) and 325 to 341 (KPWD…KCES). A compositionally biased stretch (gly residues) spans 376-385 (EGGPGPGPGV). A coiled-coil region spans residues 391 to 423 (GAREAGLELEKKRLEERIAQLISHNQAVVDDAQ). Basic and acidic residues-rich tracts occupy residues 517–526 (LEPREPRDPW), 674–684 (QDRRTPVHEDI), 707–727 (PTKH…RVEE), and 813–834 (SGED…HSWK). 2 stretches are compositionally biased toward low complexity: residues 880–894 (LESS…SVAL) and 905–919 (PLHP…HPSL). Positions 1153–1170 (SSHSGTSRSHSTRSPHST) are enriched in low complexity. A compositionally biased stretch (polar residues) spans 1518 to 1531 (QTAGRTLTSSSPDS). The span at 1649-1662 (RSLEGMRKQTRVEF) shows a compositional bias: basic and acidic residues.

This chain is Zinc finger protein 831 (ZNF831), found in Homo sapiens (Human).